Consider the following 105-residue polypeptide: MSALKIKKGDRVVVLSGKDKGKTGEVTKSFPKDAKVIVSGVNVATRHRKPSQANPQGGLERVEAPLHVSKVAIATADGKPTRVRFEVKDGKKVRVAVKTGETING.

This sequence belongs to the universal ribosomal protein uL24 family. In terms of assembly, part of the 50S ribosomal subunit.

In terms of biological role, one of two assembly initiator proteins, it binds directly to the 5'-end of the 23S rRNA, where it nucleates assembly of the 50S subunit. Its function is as follows. One of the proteins that surrounds the polypeptide exit tunnel on the outside of the subunit. This is Large ribosomal subunit protein uL24 from Rhizorhabdus wittichii (strain DSM 6014 / CCUG 31198 / JCM 15750 / NBRC 105917 / EY 4224 / RW1) (Sphingomonas wittichii).